We begin with the raw amino-acid sequence, 232 residues long: 5'-methylthioadenosine/S-adenosylhomocysteine nucleosidase (232 aa).

The Proton acceptor role is filled by E14. Substrate-binding positions include G80, V154, and 175-176; that span reads ME. Residue D199 is the Proton donor of the active site.

It belongs to the PNP/UDP phosphorylase family. MtnN subfamily.

The enzyme catalyses S-adenosyl-L-homocysteine + H2O = S-(5-deoxy-D-ribos-5-yl)-L-homocysteine + adenine. The catalysed reaction is S-methyl-5'-thioadenosine + H2O = 5-(methylsulfanyl)-D-ribose + adenine. It catalyses the reaction 5'-deoxyadenosine + H2O = 5-deoxy-D-ribose + adenine. It functions in the pathway amino-acid biosynthesis; L-methionine biosynthesis via salvage pathway; S-methyl-5-thio-alpha-D-ribose 1-phosphate from S-methyl-5'-thioadenosine (hydrolase route): step 1/2. Its function is as follows. Catalyzes the irreversible cleavage of the glycosidic bond in both 5'-methylthioadenosine (MTA) and S-adenosylhomocysteine (SAH/AdoHcy) to adenine and the corresponding thioribose, 5'-methylthioribose and S-ribosylhomocysteine, respectively. Also cleaves 5'-deoxyadenosine, a toxic by-product of radical S-adenosylmethionine (SAM) enzymes, into 5-deoxyribose and adenine. This Actinobacillus pleuropneumoniae serotype 5b (strain L20) protein is 5'-methylthioadenosine/S-adenosylhomocysteine nucleosidase.